The chain runs to 160 residues: Small ribosomal subunit protein uS7 (160 aa).

It belongs to the universal ribosomal protein uS7 family. As to quaternary structure, part of the 30S ribosomal subunit. Contacts proteins S9 and S11.

One of the primary rRNA binding proteins, it binds directly to 16S rRNA where it nucleates assembly of the head domain of the 30S subunit. Is located at the subunit interface close to the decoding center, probably blocks exit of the E-site tRNA. The protein is Small ribosomal subunit protein uS7 of Rickettsia conorii (strain ATCC VR-613 / Malish 7).